Reading from the N-terminus, the 185-residue chain is Ribosome-recycling factor (185 aa).

The protein belongs to the RRF family.

It localises to the cytoplasm. Its function is as follows. Responsible for the release of ribosomes from messenger RNA at the termination of protein biosynthesis. May increase the efficiency of translation by recycling ribosomes from one round of translation to another. This is Ribosome-recycling factor from Ehrlichia chaffeensis (strain ATCC CRL-10679 / Arkansas).